A 217-amino-acid chain; its full sequence is Orotate phosphoribosyltransferase (217 aa).

Lysine 26 is a binding site for 5-phospho-alpha-D-ribose 1-diphosphate. 34–35 (FF) serves as a coordination point for orotate. 5-phospho-alpha-D-ribose 1-diphosphate is bound by residues 72–73 (YK), arginine 99, lysine 100, lysine 103, histidine 105, and 124–132 (DDVITAGTA). 2 residues coordinate orotate: threonine 128 and arginine 156.

Belongs to the purine/pyrimidine phosphoribosyltransferase family. PyrE subfamily. Homodimer. Mg(2+) is required as a cofactor.

It catalyses the reaction orotidine 5'-phosphate + diphosphate = orotate + 5-phospho-alpha-D-ribose 1-diphosphate. Its pathway is pyrimidine metabolism; UMP biosynthesis via de novo pathway; UMP from orotate: step 1/2. Its function is as follows. Catalyzes the transfer of a ribosyl phosphate group from 5-phosphoribose 1-diphosphate to orotate, leading to the formation of orotidine monophosphate (OMP). The polypeptide is Orotate phosphoribosyltransferase (Aeromonas salmonicida (strain A449)).